Reading from the N-terminus, the 118-residue chain is Large ribosomal subunit protein bL20 (118 aa).

The protein belongs to the bacterial ribosomal protein bL20 family.

Functionally, binds directly to 23S ribosomal RNA and is necessary for the in vitro assembly process of the 50S ribosomal subunit. It is not involved in the protein synthesizing functions of that subunit. This chain is Large ribosomal subunit protein bL20, found in Stutzerimonas stutzeri (strain A1501) (Pseudomonas stutzeri).